The chain runs to 316 residues: Apolipoprotein E (316 aa).

An N-terminal signal peptide occupies residues 1–18 (MKVLWVAVVVALLAGCQA). The O-linked (GalNAc...) threonine glycan is linked to threonine 32. A run of 8 repeats spans residues 79–100 (ALME…GQLG), 101–122 (PMAQ…ARLG), 123–144 (SDME…AMLG), 145–166 (QSTE…KRLL), 167–188 (RDAD…EGAE), 189–210 (RSLS…SRAA), 211–232 (TLST…QKLH), and 233–254 (GRLE…QQLE). Positions 79 to 254 (ALMEETMKEV…RLDKIRQQLE (176 aa)) are 8 X 22 AA approximate tandem repeats. Methionine 142 is subject to Methionine sulfoxide. A Phosphoserine modification is found at serine 146. Residues 157–167 (HLRKLPKRLLR) form an LDL and other lipoprotein receptors binding region. Position 161–164 (161–164 (LPKR)) interacts with heparin. The tract at residues 209-289 (AATLSTLAGQ…SWFEPLVEDM (81 aa)) is lipid-binding and lipoprotein association. An O-linked (GalNAc...) threonine glycan is attached at threonine 211. Position 228–235 (228–235 (RQKLHGRL)) interacts with heparin. Residues 265 to 316 (NQMRLQAEAFQARLRSWFEPLVEDMQRQWAGLVEKVQLALRPSPTSPPSENH) are homooligomerization. Residues 277 to 289 (RLRSWFEPLVEDM) form a specificity for association with VLDL region. An O-linked (GalNAc...) threonine glycan is attached at threonine 309. O-linked (GalNAc...) serine glycosylation is present at serine 310.

It belongs to the apolipoprotein A1/A4/E family. In terms of assembly, homotetramer. May interact with ABCA1; functionally associated with ABCA1 in the biogenesis of HDLs. May interact with APP/A4 amyloid-beta peptide; the interaction is extremely stable in vitro but its physiological significance is unclear. May interact with MAPT. May interact with MAP2. In the cerebrospinal fluid, interacts with secreted SORL1. Interacts with PMEL; this allows the loading of PMEL luminal fragment on ILVs to induce fibril nucleation. APOE exists as multiple glycosylated and sialylated glycoforms within cells and in plasma. The extent of glycosylation and sialylation are tissue and context specific. In terms of processing, glycated in plasma VLDL. Post-translationally, phosphorylated by FAM20C in the extracellular medium.

The protein localises to the secreted. It is found in the extracellular space. Its subcellular location is the extracellular matrix. The protein resides in the extracellular vesicle. It localises to the endosome. The protein localises to the multivesicular body. Functionally, APOE is an apolipoprotein, a protein associating with lipid particles, that mainly functions in lipoprotein-mediated lipid transport between organs via the plasma and interstitial fluids. APOE is a core component of plasma lipoproteins and is involved in their production, conversion and clearance. Apolipoproteins are amphipathic molecules that interact both with lipids of the lipoprotein particle core and the aqueous environment of the plasma. As such, APOE associates with chylomicrons, chylomicron remnants, very low density lipoproteins (VLDL) and intermediate density lipoproteins (IDL) but shows a preferential binding to high-density lipoproteins (HDL). It also binds a wide range of cellular receptors including the LDL receptor/LDLR and the very low-density lipoprotein receptor/VLDLR that mediate the cellular uptake of the APOE-containing lipoprotein particles. Finally, APOE also has a heparin-binding activity and binds heparan-sulfate proteoglycans on the surface of cells, a property that supports the capture and the receptor-mediated uptake of APOE-containing lipoproteins by cells. This chain is Apolipoprotein E (APOE), found in Bos taurus (Bovine).